The chain runs to 160 residues: Phosphopantetheine adenylyltransferase (160 aa).

Thr-10 provides a ligand contact to substrate. ATP is bound by residues 10-11 (TF) and His-18. Lys-42, Leu-74, and Arg-88 together coordinate substrate. Residues 89–91 (GLR), Glu-99, and 124–130 (HGFLSST) contribute to the ATP site.

Belongs to the bacterial CoaD family. Homohexamer. Mg(2+) serves as cofactor.

The protein resides in the cytoplasm. It carries out the reaction (R)-4'-phosphopantetheine + ATP + H(+) = 3'-dephospho-CoA + diphosphate. It functions in the pathway cofactor biosynthesis; coenzyme A biosynthesis; CoA from (R)-pantothenate: step 4/5. Its function is as follows. Reversibly transfers an adenylyl group from ATP to 4'-phosphopantetheine, yielding dephospho-CoA (dPCoA) and pyrophosphate. This is Phosphopantetheine adenylyltransferase from Aliivibrio fischeri (strain MJ11) (Vibrio fischeri).